Reading from the N-terminus, the 245-residue chain is Ribonuclease 3 (245 aa).

In terms of domain architecture, RNase III spans Phe19–Gly148. Residue Glu61 coordinates Mg(2+). Asp65 is an active-site residue. Residues Asp134 and Glu137 each coordinate Mg(2+). The active site involves Glu137. The 70-residue stretch at Asp174–Glu243 folds into the DRBM domain.

It belongs to the ribonuclease III family. Homodimer. Requires Mg(2+) as cofactor.

The protein resides in the cytoplasm. It catalyses the reaction Endonucleolytic cleavage to 5'-phosphomonoester.. In terms of biological role, digests double-stranded RNA. Involved in the processing of primary rRNA transcript to yield the immediate precursors to the large and small rRNAs (23S and 16S). Processes some mRNAs, and tRNAs when they are encoded in the rRNA operon. Processes pre-crRNA and tracrRNA of type II CRISPR loci if present in the organism. The sequence is that of Ribonuclease 3 from Bacillus cytotoxicus (strain DSM 22905 / CIP 110041 / 391-98 / NVH 391-98).